A 544-amino-acid polypeptide reads, in one-letter code: MFS-type transporter prx5 (544 aa).

Residues 1–28 (MAVDTEKDSVQAGSPMETPGSPVDETTE) form a disordered region. The next 13 helical transmembrane spans lie at 36–56 (WIVS…IPVV), 90–110 (LDHL…VASA), 116–136 (VIAG…AAFA), 148–168 (IGVV…PVTA), 178–198 (AWNF…LLFL), 221–241 (GAFL…WAGV), 249–269 (VVAP…WESF), 290–310 (FTAP…SSIL), 330–350 (VILS…LTCF), 361–381 (LTGS…VTPT), 387–407 (IAFI…SIAI), 418–438 (GVSG…ATSI), and 505–525 (AIFV…AACL).

Belongs to the major facilitator superfamily.

It is found in the cell membrane. Its function is as follows. MFS-type transporter; part of the gene cluster that mediates the biosynthesis of PR-toxin, a bicyclic sesquiterpene belonging to the eremophilane class and acting as a mycotoxin. The protein is MFS-type transporter prx5 of Penicillium rubens (strain ATCC 28089 / DSM 1075 / NRRL 1951 / Wisconsin 54-1255) (Penicillium chrysogenum).